Consider the following 956-residue polypeptide: ATPase 11, plasma membrane-type (956 aa).

The Cytoplasmic segment spans residues 1-65 (MGDKEEVLEA…EKKESKFLKF (65 aa)). A helical membrane pass occupies residues 66–85 (LGFMWNPLSWVMEAAAIMAI). At 86–97 (ALANGGGKPPDW) the chain is on the extracellular side. A helical membrane pass occupies residues 98–118 (QDFVGIITLLVINSTISFIEE). Residues 119 to 247 (NNAGNAAAAL…GHFQQVLTAI (129 aa)) are Cytoplasmic-facing. The chain crosses the membrane as a helical span at residues 248–268 (GNFCICSIAVGMIIEIVVMYP). Residues 269–277 (IQHRAYRPG) lie on the Extracellular side of the membrane. The helical transmembrane segment at 278 to 295 (IDNLLVLLIGGIPIAMPT) threads the bilayer. The Cytoplasmic portion of the chain corresponds to 296–647 (VLSVTMAIGS…TSRAIFQRMK (352 aa)). The active-site 4-aspartylphosphate intermediate is the aspartate 333. Mg(2+) contacts are provided by aspartate 592 and aspartate 596. Residues 648 to 669 (NYTIYAVSITIRIVLGFMLLAL) traverse the membrane as a helical segment. Topologically, residues 670-674 (IWKFD) are extracellular. A helical transmembrane segment spans residues 675-697 (FPPFMVLIIAILNDGTIMTISKD). The Cytoplasmic portion of the chain corresponds to 698–713 (RVKPSPLPDSWKLSEI). Residues 714 to 734 (FATGVVFGSYMAMMTVIFFWA) traverse the membrane as a helical segment. At 735 to 759 (AYKTDFFPRTFGVSTLEKTAHDDFR) the chain is on the extracellular side. Residues 760–780 (KLASAIYLQVSIISQALIFVT) traverse the membrane as a helical segment. Over 781 to 792 (RSRSWSYVERPG) the chain is Cytoplasmic. The chain crosses the membrane as a helical span at residues 793 to 813 (MLLVVAFILAQLVATLIAVYA). The Extracellular portion of the chain corresponds to 814 to 821 (NWSFAAIE). Residues 822-842 (GIGWGWAGVIWLYNIVFYIPL) form a helical membrane-spanning segment. Residues 843–956 (DIIKFLIRYA…IETIQQAYTV (114 aa)) lie on the Cytoplasmic side of the membrane. Phosphothreonine is present on threonine 889. Position 938 is a phosphoserine (serine 938). The interaction with 14-3-3 proteins stretch occupies residues 954-956 (YTV). Phosphothreonine is present on threonine 955.

The protein belongs to the cation transport ATPase (P-type) (TC 3.A.3) family. Type IIIA subfamily. Binds to 14-3-3 proteins. The binding is induced by phosphorylation of Thr-955. Binding to 14-3-3 proteins activates the H(+)-ATPase. In terms of tissue distribution, expressed in guard cells, mesophyll cells, leaves and roots.

The protein resides in the membrane. It carries out the reaction ATP + H2O + H(+)(in) = ADP + phosphate + 2 H(+)(out). Its function is as follows. The plasma membrane H(+) ATPase of plants and fungi generates a proton gradient that drives the active transport of nutrients by H(+)-symport. The resulting external acidification and/or internal alkinization may mediate growth responses. This is ATPase 11, plasma membrane-type (AHA11) from Arabidopsis thaliana (Mouse-ear cress).